Reading from the N-terminus, the 740-residue chain is Arf-GAP with coiled-coil, ANK repeat and PH domain-containing protein 1 (740 aa).

One can recognise a BAR domain in the interval M1 to Q226. The required for formation of endosomal tubules when overexpressed with PIP5K1C stretch occupies residues M1–L382. The PH domain occupies G265–A360. An Arf-GAP domain is found at G405–R527. A required for interaction with GULP1 region spans residues G405–L740. A C4-type zinc finger spans residues C420–C443. The residue at position 485 (Y485) is a 3'-nitrotyrosine. Residues E525–L566 form a prevents interaction with ITGB1 when S-554 is not phosphorylated region. The segment at E525–H581 is disordered. Positions G538 to R549 are enriched in pro residues. Position 554 is a phosphoserine; by PKB (S554). ANK repeat units follow at residues D606–Q635, A639–A668, and E672–A702.

In terms of assembly, banana-shaped homodimer laterally assembling into tetramers, the tetramers further pack helically onto the membrane. Interacts with GTP-bound ARF6. Interacts with third cytoplasmic loop of SLC2A4/GLUT4. Interacts with CLTC. Interacts with GULP1. Forms a complex with GDP-bound ARF6 and GULP1. Interacts with ITGB1; required for ITGB1 recycling. In terms of processing, phosphorylation at Ser-554 by PKB is required for interaction with ITGB1, export of ITGB1 from recycling endosomes to the cell surface and ITGB1-dependent cell migration. In terms of tissue distribution, highest level in lung and spleen. Low level in heart, kidney, liver and pancreas.

The protein localises to the recycling endosome membrane. With respect to regulation, GAP activity stimulated by phosphatidylinositol 4,5-bisphosphate (PIP2) and phosphatidic acid. Functionally, GTPase-activating protein (GAP) for ADP ribosylation factor 6 (ARF6) required for clathrin-dependent export of proteins from recycling endosomes to trans-Golgi network and cell surface. Required for regulated export of ITGB1 from recycling endosomes to the cell surface and ITGB1-dependent cell migration. This Homo sapiens (Human) protein is Arf-GAP with coiled-coil, ANK repeat and PH domain-containing protein 1 (ACAP1).